Consider the following 116-residue polypeptide: Putative membrane protein insertion efficiency factor (116 aa).

This sequence belongs to the UPF0161 family.

It is found in the cell inner membrane. In terms of biological role, could be involved in insertion of integral membrane proteins into the membrane. This Bartonella tribocorum (strain CIP 105476 / IBS 506) protein is Putative membrane protein insertion efficiency factor.